We begin with the raw amino-acid sequence, 221 residues long: Pre-rRNA-processing protein SRD1 (221 aa).

A compositionally biased stretch (polar residues) spans 101-110; the sequence is SKNRVTSACN. Disordered stretches follow at residues 101-121 and 137-161; these read SKNR…QEAN and ASIT…TILP. Basic residues predominate over residues 142–155; it reads KYSKKTTSRPKREK. A GATA-type zinc finger spans residues 168-193; that stretch reads CSKCKDTWTIQWRSGPDQNRELCSPC. Residues 201–221 form a disordered region; that stretch reads LKKENEKKRQAADKRIDRNNP. Over residues 203–221 the composition is skewed to basic and acidic residues; that stretch reads KENEKKRQAADKRIDRNNP.

The protein resides in the cytoplasm. The protein localises to the nucleus. In terms of biological role, plays a direct or indirect role in pre-rRNA processing. The sequence is that of Pre-rRNA-processing protein SRD1 (SRD1) from Saccharomyces cerevisiae (strain ATCC 204508 / S288c) (Baker's yeast).